A 316-amino-acid chain; its full sequence is Ribosomal RNA small subunit methyltransferase H (316 aa).

S-adenosyl-L-methionine-binding positions include 37-39, Asp56, Phe83, Asp106, and His113; that span reads GGH. The segment at 276-316 is disordered; that stretch reads PILPSEEETKENPASRSAKLRVLRKTKSADKKYKKENSKEE. Positions 302-316 are enriched in basic and acidic residues; sequence KSADKKYKKENSKEE.

It belongs to the methyltransferase superfamily. RsmH family.

It localises to the cytoplasm. It catalyses the reaction cytidine(1402) in 16S rRNA + S-adenosyl-L-methionine = N(4)-methylcytidine(1402) in 16S rRNA + S-adenosyl-L-homocysteine + H(+). In terms of biological role, specifically methylates the N4 position of cytidine in position 1402 (C1402) of 16S rRNA. This Leptospira borgpetersenii serovar Hardjo-bovis (strain L550) protein is Ribosomal RNA small subunit methyltransferase H.